A 229-amino-acid polypeptide reads, in one-letter code: Flagellar L-ring protein (229 aa).

The first 25 residues, 1-25, serve as a signal peptide directing secretion; the sequence is MKQVRLLPSATVRAACAVAVAALAG. Residue Cys26 is the site of N-palmitoyl cysteine attachment. Cys26 is lipidated: S-diacylglycerol cysteine.

The protein belongs to the FlgH family. As to quaternary structure, the basal body constitutes a major portion of the flagellar organelle and consists of four rings (L,P,S, and M) mounted on a central rod.

It localises to the cell outer membrane. The protein resides in the bacterial flagellum basal body. Assembles around the rod to form the L-ring and probably protects the motor/basal body from shearing forces during rotation. This is Flagellar L-ring protein from Burkholderia vietnamiensis (strain G4 / LMG 22486) (Burkholderia cepacia (strain R1808)).